Here is a 309-residue protein sequence, read N- to C-terminus: Ribose-phosphate pyrophosphokinase (309 aa).

ATP contacts are provided by residues 37–39 (DGE) and 96–97 (RQ). His-130 and Asp-169 together coordinate Mg(2+). The active site involves Lys-192. D-ribose 5-phosphate is bound by residues Arg-194, Asp-218, and 222 to 226 (DTAGT).

The protein belongs to the ribose-phosphate pyrophosphokinase family. Class I subfamily. As to quaternary structure, homohexamer. Mg(2+) serves as cofactor.

The protein localises to the cytoplasm. It carries out the reaction D-ribose 5-phosphate + ATP = 5-phospho-alpha-D-ribose 1-diphosphate + AMP + H(+). It participates in metabolic intermediate biosynthesis; 5-phospho-alpha-D-ribose 1-diphosphate biosynthesis; 5-phospho-alpha-D-ribose 1-diphosphate from D-ribose 5-phosphate (route I): step 1/1. Functionally, involved in the biosynthesis of the central metabolite phospho-alpha-D-ribosyl-1-pyrophosphate (PRPP) via the transfer of pyrophosphoryl group from ATP to 1-hydroxyl of ribose-5-phosphate (Rib-5-P). This chain is Ribose-phosphate pyrophosphokinase, found in Helicobacter hepaticus (strain ATCC 51449 / 3B1).